Here is a 59-residue protein sequence, read N- to C-terminus: Small ribosomal subunit protein bS21 (59 aa).

A disordered region spans residues 34-59 (KHEHYEKPSVKRKKKSEAARRRKRSF). Residues 43-59 (VKRKKKSEAARRRKRSF) show a composition bias toward basic residues.

Belongs to the bacterial ribosomal protein bS21 family.

The chain is Small ribosomal subunit protein bS21 from Desulforudis audaxviator (strain MP104C).